Reading from the N-terminus, the 89-residue chain is MSSYHAAYIDYELRVTESMTDTMGTDTEITLKPYQHFVASVFLGLDKMHSLLLFHDTGVGKTITTTFIIKQLKNIYTNWSILLLVKKHL.

The region spanning 42–89 is the Helicase ATP-binding domain; sequence FLGLDKMHSLLLFHDTGVGKTITTTFIIKQLKNIYTNWSILLLVKKHL. 55–62 lines the ATP pocket; that stretch reads HDTGVGKT.

It belongs to the helicase family. NPH I subfamily.

It catalyses the reaction a ribonucleoside 5'-triphosphate + H2O = a ribonucleoside 5'-diphosphate + phosphate + H(+). In terms of biological role, serves two roles in transcription; it acts in concert with viral termination factor/capping enzyme to catalyze release of UUUUUNU-containing nascent RNA from the elongation complex, and it acts by itself as a polymerase elongation factor to facilitate readthrough of intrinsic pause sites. The protein is Nucleoside triphosphatase I (NPH1) of Swinepox virus (strain Kasza) (SWPV).